A 188-amino-acid polypeptide reads, in one-letter code: FMN-dependent NADPH-azoreductase (188 aa).

It belongs to the azoreductase type 2 family. In terms of assembly, homotetramer. FMN is required as a cofactor.

Catalyzes the reductive cleavage of azo bond in aromatic azo compounds to the corresponding amines. Requires NADPH, but not NADH, as an electron donor for its activity. The sequence is that of FMN-dependent NADPH-azoreductase (azo1) from Staphylococcus saprophyticus subsp. saprophyticus (strain ATCC 15305 / DSM 20229 / NCIMB 8711 / NCTC 7292 / S-41).